A 211-amino-acid chain; its full sequence is SAGA-associated factor 11 homolog 2 (211 aa).

The segment at cysteine 115–cysteine 136 adopts an SGF11-type zinc-finger fold. The segment at arginine 149 to phenylalanine 211 is disordered. Low complexity predominate over residues serine 157–threonine 166. Position 187 is a phosphoserine (serine 187). Residues serine 197 to phenylalanine 211 are compositionally biased toward low complexity.

Belongs to the SGF11 family. In terms of assembly, component of some SAGA transcription coactivator-HAT complexes, at least composed of Ada2b, not/nonstop, Pcaf/Gcn5, Sgf11 and Spt3. Within the SAGA complex, Sgf11, e(y)2, and not/nonstop form an additional subcomplex of SAGA called the DUB module (deubiquitination module). Interacts directly with not/nonstop. Interacts with the AMEX complex component xmas-2. Interacts with Cbp80; important for promoter recruitment of Sgf11 that is not associated with the DUB module.

Its subcellular location is the nucleus. The protein resides in the nucleoplasm. It is found in the cytoplasm. Component of the transcription regulatory histone acetylation (HAT) complex SAGA, a multiprotein complex that activates transcription by remodeling chromatin and mediating histone acetylation and deubiquitination. Within the SAGA complex, participates in a subcomplex that specifically deubiquitinates histone H2B. The SAGA complex is recruited to specific gene promoters by activators, where it is required for transcription. Required for nuclear receptor-mediated transactivation. Binds independently on SAGA to promoters in an RNA-dependent manner. Binds to mRNA and is essential for total mRNA export from the nucleus. Required to counteract heterochromatin silencing. Controls the development of neuronal connectivity in visual system by being required for accurate axon targeting in the optic lobe. Required for expression of ecdysone-induced genes such as br/broad. This chain is SAGA-associated factor 11 homolog 2, found in Drosophila grimshawi (Hawaiian fruit fly).